The following is a 142-amino-acid chain: Histone H2B (142 aa).

The span at 1–10 (MPPKPAEKKP) shows a compositional bias: basic and acidic residues. Residues 1-50 (MPPKPAEKKPSSTAGKAPASSAGKAPAEAAKKTSKAPAKSGEKKKATKVR) are disordered. An N6-acetyllysine; alternate mark is found at Lys8 and Lys9. Residues Lys8 and Lys9 each participate in a glycyl lysine isopeptide (Lys-Gly) (interchain with G-Cter in SUMO); alternate cross-link. The span at 11 to 28 (SSTAGKAPASSAGKAPAE) shows a compositional bias: low complexity. Residue Lys24 is modified to N6-acetyllysine. Over residues 40 to 50 (SGEKKKATKVR) the composition is skewed to basic and acidic residues. A Glycyl lysine isopeptide (Lys-Gly) (interchain with G-Cter in ubiquitin) cross-link involves residue Lys137.

The protein belongs to the histone H2B family. In terms of assembly, the nucleosome is a histone octamer containing two molecules each of H2A, H2B, H3 and H4 assembled in one H3-H4 heterotetramer and two H2A-H2B heterodimers. The octamer wraps approximately 147 bp of DNA. Post-translationally, monoubiquitinated by the UBC2-BRE1 complex to form H2BK123ub1. H2BK123ub1 gives a specific tag for epigenetic transcriptional activation and is also prerequisite for H3K4me and H3K79me formation. H2BK123ub1 also modulates the formation of double-strand breaks during meiosis and is a prerequisite for DNA-damage checkpoint activation. Acetylation of N-terminal lysines and particularly formation of H2BK11ac has a positive effect on transcription. In terms of processing, sumoylation to form H2BK6su or H2BK7su occurs preferentially near the telomeres and represses gene transcription.

It localises to the nucleus. The protein localises to the chromosome. Functionally, core component of nucleosome. Nucleosomes wrap and compact DNA into chromatin, limiting DNA accessibility to the cellular machineries which require DNA as a template. Histones thereby play a central role in transcription regulation, DNA repair, DNA replication and chromosomal stability. DNA accessibility is regulated via a complex set of post-translational modifications of histones, also called histone code, and nucleosome remodeling. In Mycosarcoma maydis (Corn smut fungus), this protein is Histone H2B (HTB1).